Here is a 296-residue protein sequence, read N- to C-terminus: Protoheme IX farnesyltransferase (296 aa).

Transmembrane regions (helical) follow at residues 11–31 (PGII…AAQG), 35–55 (YPLF…GCVF), 84–104 (VTLV…YIAA), 107–127 (LAMW…SLYM), 132–152 (VYGT…GYCA), 162–182 (LILL…IAIF), 208–228 (ITLY…GGYA), 229–249 (GYKY…MALS), and 264–284 (LFVF…VDSM).

Belongs to the UbiA prenyltransferase family. Protoheme IX farnesyltransferase subfamily.

It localises to the cell inner membrane. The catalysed reaction is heme b + (2E,6E)-farnesyl diphosphate + H2O = Fe(II)-heme o + diphosphate. It functions in the pathway porphyrin-containing compound metabolism; heme O biosynthesis; heme O from protoheme: step 1/1. Converts heme B (protoheme IX) to heme O by substitution of the vinyl group on carbon 2 of heme B porphyrin ring with a hydroxyethyl farnesyl side group. This chain is Protoheme IX farnesyltransferase, found in Pectobacterium carotovorum subsp. carotovorum (strain PC1).